The chain runs to 474 residues: MNAAATKLPTQLGSIHFVGIGGIGMSGIAEVLLNHGYDVQGSDLKASPITERLERLGARVFVGQQAENLEGAEVVVISSAIKPGNPEYDAARLRGLPIVRRAEMLAELMRLRSNIAVGGTHGKTTTTTMVATLLDHGGVDPTVINGGIIHAYGSNARVGQGDWMVVEADESDGTFNRLPATIAIVTNIDPEHMEHWGTIENLRQGFLDFVSNIPFYGLAVCCTDHPEVQTLVGKITDRRVVTFGFNAQADVRAVNLHYRAGVACFDIALQSEDILIEGCTLPMPGDHNVSNALAAVAVARHLGMKADEIREALDGFKGVNRRFTKVGEVGGITVIDDYGHHPVEIAAVLKAARQASDGRVIAVHQPHRYSRLHSLFDDFCGCFSEADVVAIAEVYAAGEDPIEGASRDDLVAGMIRHGHRHARAILDEDDLERLVREQARPGDMVVCLGAGTISAWANGLPARLSDLDKTAATG.

An ATP-binding site is contributed by 119 to 125; sequence GTHGKTT.

Belongs to the MurCDEF family.

The protein resides in the cytoplasm. It catalyses the reaction UDP-N-acetyl-alpha-D-muramate + L-alanine + ATP = UDP-N-acetyl-alpha-D-muramoyl-L-alanine + ADP + phosphate + H(+). Its pathway is cell wall biogenesis; peptidoglycan biosynthesis. In terms of biological role, cell wall formation. The sequence is that of UDP-N-acetylmuramate--L-alanine ligase from Jannaschia sp. (strain CCS1).